Consider the following 466-residue polypeptide: Uronate isomerase (466 aa).

The protein belongs to the metallo-dependent hydrolases superfamily. Uronate isomerase family.

The catalysed reaction is D-glucuronate = D-fructuronate. It carries out the reaction aldehydo-D-galacturonate = keto-D-tagaturonate. It participates in carbohydrate metabolism; pentose and glucuronate interconversion. This chain is Uronate isomerase, found in Streptococcus agalactiae serotype III (strain NEM316).